The chain runs to 417 residues: Gamma-glutamyl phosphate reductase (417 aa).

This sequence belongs to the gamma-glutamyl phosphate reductase family.

The protein resides in the cytoplasm. It carries out the reaction L-glutamate 5-semialdehyde + phosphate + NADP(+) = L-glutamyl 5-phosphate + NADPH + H(+). It participates in amino-acid biosynthesis; L-proline biosynthesis; L-glutamate 5-semialdehyde from L-glutamate: step 2/2. Catalyzes the NADPH-dependent reduction of L-glutamate 5-phosphate into L-glutamate 5-semialdehyde and phosphate. The product spontaneously undergoes cyclization to form 1-pyrroline-5-carboxylate. This chain is Gamma-glutamyl phosphate reductase, found in Legionella pneumophila (strain Lens).